The chain runs to 1507 residues: Protein similar (1507 aa).

The disordered stretch occupies residues 1–85; it reads MVSLIDTIEA…KSRDAARCRR (85 aa). Positions 26-49 are enriched in low complexity; it reads SASSSSCSSSFSSSPPSSSVGSPS. Residues 72–85 are compositionally biased toward basic and acidic residues; that stretch reads KRKEKSRDAARCRR. The region spanning 72–125 is the bHLH domain; the sequence is KRKEKSRDAARCRRSKETEIFMELSAALPLKTDDVNQLDKASVMRITIAFLKIR. 2 PAS domains span residues 167–240 and 307–377; these read NGAE…LAQK and PHPS…LSKG. Residues 381–422 form the PAC domain; it reads TSRYRFLGKYGGYCWILSQATIVYDKLKPQSVVCVNYVISNL. Disordered regions lie at residues 433–459, 541–588, 706–832, and 900–951; these read QQTA…KAAD, HSPG…PPPT, TCST…CSPN, and YAGN…QAAV. Positions 439–459 are enriched in basic and acidic residues; it reads EQKEQHHQAAETEKEPEKAAD. Residues 548 to 559 are compositionally biased toward polar residues; sequence ITAQLLSGSSSG. Over residues 578–588 the composition is skewed to pro residues; that stretch reads SPAPPLTPPPT. The segment at 692–863 is ODD; it reads TCLLPEDINS…IDDDMPLLTE (172 aa). Residues 706–717 are compositionally biased toward polar residues; sequence TCSTTASGQHYQ. Low complexity-rich tracts occupy residues 718–745 and 754–777; these read SPSS…LSPL and SNPS…QQQH. A compositionally biased stretch (polar residues) spans 803–818; it reads DTSCSQHLHSPSITSK. 3 stretches are compositionally biased toward low complexity: residues 823–832, 907–918, and 926–951; these read SSLPSLCSPN, QQQQQQPQLQQQ, and SSPA…QAAV. Residues 880 to 908 are a coiled coil; sequence KEIDAIQQQLQQLQQQHHQQYAGNTGYQQ. 2 coiled-coil regions span residues 982–1054 and 1110–1162; these read AEEC…YDVQ and QLLQ…QLQQ. Disordered regions lie at residues 1204–1228, 1251–1287, and 1356–1460; these read PQQQ…VESK, KDPA…QSNS, and FGGS…KTSI. The segment covering 1413 to 1423 has biased composition (polar residues); it reads SSTSNSTNQAE.

In terms of assembly, efficient DNA binding requires dimerization with another bHLH protein. Interacts with Vhl. As to expression, ubiquitously expressed in the embryo.

Its subcellular location is the cytoplasm. It localises to the nucleus. Its function is as follows. Functions as a transcriptional regulator of the adaptive response to hypoxia. Binds to core DNA sequence 5'-[AG]CGTG-3' within the hypoxia response element (HRE) of target gene promoters. The chain is Protein similar (sima) from Drosophila melanogaster (Fruit fly).